Here is a 2624-residue protein sequence, read N- to C-terminus: Transcription factor TFIIIB component B'' homolog (2624 aa).

The interval 1–142 is disordered; the sequence is MFRRARLSVK…TKEKQPCSDR (142 aa). The interval 1 to 299 is interaction with ZBTB43; the sequence is MFRRARLSVK…TYSSFRKNYY (299 aa). The segment covering 63–77 has biased composition (basic and acidic residues); the sequence is PQEKAPRSSTEKTGG. The segment covering 99 to 119 has biased composition (low complexity); it reads SSTSSLVKSSVSVPSESHPLS. A compositionally biased stretch (polar residues) spans 120–132; sequence TINQEAPQPTATS. Residues 133-142 show a composition bias toward basic and acidic residues; sequence TKEKQPCSDR. Residues 144-177 adopt a coiled-coil conformation; it reads RIYKAQKLREMLKEELRKEKKQWKNKYAINESQR. A disordered region spans residues 193 to 241; it reads LPDNNPMTSSLEQEKKTEKPSTPVQTREQEGKSTPNAEDNEMEEETDDG. The segment covering 212–229 has biased composition (polar residues); the sequence is PSTPVQTREQEGKSTPNA. Positions 230-240 are enriched in acidic residues; it reads EDNEMEEETDD. The region spanning 295–345 is the Myb-like domain; that stretch reads RKNYYSKPWSNKETDMFFLAISMVGTDFSMIGQLFPHRARIEIKNKFKREE. A required for phosphorylation by CSNK2A1 region spans residues 355-470; sequence AFQEKRPFDF…QKKRRRKKQD (116 aa). 4 disordered regions span residues 379–449, 544–567, 606–663, and 729–759; these read EKRK…SRED, LSLSNQQDATSVATESSESSTSDL, ENVK…MNTL, and EEIGANVEKNENESCADRDTPQHMEDQSRKD. The segment covering 397–407 has biased composition (basic residues); that stretch reads TKPRKNVKVKK. A compositionally biased stretch (low complexity) spans 552–565; it reads ATSVATESSESSTS. 2 stretches are compositionally biased toward basic and acidic residues: residues 637 to 663 and 736 to 759; these read TESESKNSHSKTSVEKNHVEKDKMNTL and EKNENESCADRDTPQHMEDQSRKD. The stretch at 823–877 is one 1; approximate repeat; that stretch reads GRREISSKEEVLEKILVSGEMAAALRETVRLDTSPKEMVPAEINTKEMQSDLKET. The segment at 823 to 1327 is 9 X 55 AA repeats of G-R-R-X-I-S-P-X-E-N-G-X-E-E-V-K-P-X-X-E-M-E-T-D-L-K-X-T-G-R-E-X-X-X-R-E-K-T-X-E-X-X-D-A-X-E-E-I-D-X-D-L-E-E-T; the sequence is GRREISSKEE…PRENELEETS (505 aa). 6 tandem repeats follow at residues 878–932, 933–987, 988–1040, 1041–1094, 1095–1148, and 1149–1203. Thr-915 bears the Phosphothreonine mark. Composition is skewed to basic and acidic residues over residues 930–957 and 979–1006; these read EEAGRREISPQKNGPEEVKPLGEVETDL and EIDKNLEETGRRKISPRENGPEEVKPVD. The disordered stretch occupies residues 930 to 1222; the sequence is EEAGRREISP…GPEEVKPVGK (293 aa). Residues 1030 to 1041 are compositionally biased toward acidic residues; sequence DATEEIDLEETE. A compositionally biased stretch (basic and acidic residues) spans 1052-1079; it reads EEVKPLGEMETDLKATGRDSFPRGKTPE. Residues 1078 to 1103 adopt a coiled-coil conformation; sequence PEVIDAIEEIEIDLEETEREISPQEN. The segment covering 1082 to 1095 has biased composition (acidic residues); it reads DAIEEIEIDLEETE. Positions 1120–1133 are enriched in basic and acidic residues; the sequence is ATGREISPREKTPE. Positions 1136 to 1145 are enriched in acidic residues; that stretch reads DATEEIDKDL. Basic and acidic residues predominate over residues 1161 to 1190; the sequence is EEVKPVDEMETDLKTTGREGSSREKTREVI. A compositionally biased stretch (acidic residues) spans 1194–1204; the sequence is EVIETDLEETE. Residues 1204–1257 form an 8; approximate repeat; it reads EREISPQENGPEEVKPVGKMETDLKEIREEISQREKVLAEFSAIREKEIDLKET. A coiled-coil region spans residues 1223–1284; it reads METDLKEIRE…VEEMEADLKE (62 aa). One copy of the 9; approximate repeat lies at 1258-1327; it reads GKRDIPIMEK…PRENELEETS (70 aa). Over residues 1306-1321 the composition is skewed to basic and acidic residues; it reads AELKQTGKTDISPREN. 10 disordered regions span residues 1306 to 1348, 1365 to 1440, 1519 to 1543, 1684 to 1722, 1819 to 1863, 2130 to 2164, 2181 to 2200, 2207 to 2241, 2444 to 2501, and 2519 to 2566; these read AELK…SAVP, TPVE…RFKR, TERNLSPSNSCEPKEESQSAPVQKN, KAKPNLGRAHSKKEEPVLEKVTTDQSKEGKPEDHLLQKG, STSE…ASKA, GAEMETQRETEKNASKATELENKNLGPVTTAENKD, SEVNLTERNENQEESSQEVH, VASSETGPCTLGLDRGLGENSVEEPQIKDSKGDSV, FQSR…SRPG, and SDEP…PSPS. The segment covering 1326 to 1344 has biased composition (polar residues); that stretch reads TSTSRQTDTHLMQSGSNDF. The span at 1366-1378 shows a compositional bias: basic and acidic residues; sequence PVEEKRNSEKEVS. Polar residues-rich tracts occupy residues 1379-1390, 1411-1421, and 1519-1529; these read SHFSHFKISSQT, SDINLSKSLPQ, and TERNLSPSNSC. Basic and acidic residues predominate over residues 1695–1719; sequence KKEEPVLEKVTTDQSKEGKPEDHLL. Basic residues predominate over residues 1844-1853; sequence RGSKRVRGKT. The span at 2131–2151 shows a compositional bias: basic and acidic residues; it reads AEMETQRETEKNASKATELEN. The segment covering 2470 to 2479 has biased composition (basic and acidic residues); it reads VSDKEERTDA. The segment covering 2488-2498 has biased composition (low complexity); sequence SRTSSSKASLS. The span at 2526–2544 shows a compositional bias: basic residues; it reads HSKKRLKPLIPGLRKKLKR.

In terms of assembly, component of TFIIIB complex. The TFIIIB complex has two activities, alpha and beta. The TFIIIB-alpha and TFIIIB-beta activities are required for transcription of genes with TFIIIC-bound internal promoters and PSE transcription factor-bound external promoters, respectively. The TFIIIB-alpha activity complex is composed of TBP, BDP1, and a complex containing both BRF2 and at least four stably associated proteins; YY1 facilitates the formation of TFIIIB-alpha activity complex. The TFIIIB-beta activity complex is composed of TBP, BDP1, and BRF1. Interacts with BRF1; this interaction diminishes during mitosis resulting in the release of BDP1 from chromosomal templates. Component of TFIIIC complex. The TFIIIC complex has two activities, C1 and C2. The TFIIIC2 activity complex is only required for transcription of the 'classical' pol III genes whereas the TFIIIC1 activity complex is required for transcription of all pol III genes. The TFIIIC1 activity complex is composed at least of BDP1. Interacts with ZBTB43. Post-translationally, phosphorylated by CSNK2A1 during mitosis, resulting in its release from chromatin and suppression of polymerase III transcription. In terms of tissue distribution, isoform 2 is highly expressed in cerebellum.

It localises to the nucleus. Its function is as follows. General activator of RNA polymerase III transcription. Requires for transcription from all three types of polymerase III promoters. Requires for transcription of genes with internal promoter elements and with promoter elements upstream of the initiation site. This chain is Transcription factor TFIIIB component B'' homolog (BDP1), found in Homo sapiens (Human).